We begin with the raw amino-acid sequence, 545 residues long: Chaperonin GroEL 1 (545 aa).

ATP is bound by residues 29 to 32 (TLGP), 86 to 90 (DGTTT), glycine 413, 479 to 481 (DAA), and aspartate 495. The segment at 525 to 545 (PEPKENNPAGSGAGMGGDFDY) is disordered. Positions 535 to 545 (SGAGMGGDFDY) are enriched in gly residues.

It belongs to the chaperonin (HSP60) family. Forms a cylinder of 14 subunits composed of two heptameric rings stacked back-to-back. Interacts with the co-chaperonin GroES.

It localises to the cytoplasm. It carries out the reaction ATP + H2O + a folded polypeptide = ADP + phosphate + an unfolded polypeptide.. Functionally, together with its co-chaperonin GroES, plays an essential role in assisting protein folding. The GroEL-GroES system forms a nano-cage that allows encapsulation of the non-native substrate proteins and provides a physical environment optimized to promote and accelerate protein folding. This chain is Chaperonin GroEL 1, found in Thermostichus vulcanus (Synechococcus vulcanus).